The following is a 917-amino-acid chain: Nitrate reductase [NADH] 1 (917 aa).

A disordered region spans residues 62 to 81 (DSYDDSSSDDEDESHNRNVP). The segment covering 63 to 74 (SYDDSSSDDEDE) has biased composition (acidic residues). Residue cysteine 197 participates in Mo-molybdopterin binding. Residues 545-620 (SKMYSISEVR…LEDYRIGELI (76 aa)) enclose the Cytochrome b5 heme-binding domain. Residues histidine 580 and histidine 603 each coordinate heme. One can recognise an FAD-binding FR-type domain in the interval 660 to 772 (REKIPVRLIE…KGPLGHIEYK (113 aa)). Residues 712-715 (RAYT), 729-733 (VVKVY), phenylalanine 734, phenylalanine 741, 746-748 (LMS), and threonine 799 contribute to the FAD site.

This sequence belongs to the nitrate reductase family. Homodimer. Requires FAD as cofactor. It depends on heme as a cofactor. Mo-molybdopterin is required as a cofactor. In terms of tissue distribution, root, leaf, and shoot.

It catalyses the reaction nitrite + NAD(+) + H2O = nitrate + NADH + H(+). Its function is as follows. Nitrate reductase is a key enzyme involved in the first step of nitrate assimilation in plants, fungi and bacteria. This Arabidopsis thaliana (Mouse-ear cress) protein is Nitrate reductase [NADH] 1 (NIA1).